A 128-amino-acid chain; its full sequence is Large ribosomal subunit protein uL18 (128 aa).

The interval 1–36 is disordered; the sequence is MAKRSSLTRRGVSPRAAARARRHMRVRKKVRGTPER. Residues 18–31 show a composition bias toward basic residues; that stretch reads ARARRHMRVRKKVR.

This sequence belongs to the universal ribosomal protein uL18 family. In terms of assembly, part of the 50S ribosomal subunit; part of the 5S rRNA/L5/L18/L25 subcomplex. Contacts the 5S and 23S rRNAs.

This is one of the proteins that bind and probably mediate the attachment of the 5S RNA into the large ribosomal subunit, where it forms part of the central protuberance. In Thermobifida fusca (strain YX), this protein is Large ribosomal subunit protein uL18.